We begin with the raw amino-acid sequence, 118 residues long: Small ribosomal subunit protein uS13 (118 aa).

The disordered stretch occupies residues 94 to 118 (SLPVRGQRTKTNARTRKGPRKAIKK).

Belongs to the universal ribosomal protein uS13 family. As to quaternary structure, part of the 30S ribosomal subunit. Forms a loose heterodimer with protein S19. Forms two bridges to the 50S subunit in the 70S ribosome.

Its function is as follows. Located at the top of the head of the 30S subunit, it contacts several helices of the 16S rRNA. In the 70S ribosome it contacts the 23S rRNA (bridge B1a) and protein L5 of the 50S subunit (bridge B1b), connecting the 2 subunits; these bridges are implicated in subunit movement. Contacts the tRNAs in the A and P-sites. The sequence is that of Small ribosomal subunit protein uS13 from Aeromonas hydrophila subsp. hydrophila (strain ATCC 7966 / DSM 30187 / BCRC 13018 / CCUG 14551 / JCM 1027 / KCTC 2358 / NCIMB 9240 / NCTC 8049).